Consider the following 111-residue polypeptide: UPF0060 membrane protein HCH_03337 (111 aa).

The next 4 helical transmembrane spans lie at 8–28, 33–53, 65–85, and 88–108; these read LLFA…WLVI, SLWL…LLTL, YGGM…GVGL, and FDFL…LQPI.

The protein belongs to the UPF0060 family.

The protein resides in the cell inner membrane. The chain is UPF0060 membrane protein HCH_03337 from Hahella chejuensis (strain KCTC 2396).